Consider the following 195-residue polypeptide: AISITCEGSDALLQCDGAKIHIKRANYGRRQHDVCSIGRPDNQLTDTNCLSQSSTSKMAERCGGKSECIVPASNFVFGDPCVGTYKYLDTKYSCVQQQETISSIICEGSDSQLLCDRGEIRIQRANYGRRQHDVCSIGRPHQQLKNTNCLSQSTTSKMAERCDGKRQCIVSVSNSVFGDPCVGTYKYLDVAYTCD.

SUEL-type lectin domains lie at 1 to 95 and 105 to 195; these read AISI…YSCV and ICEG…YTCD.

In terms of biological role, L-rhamnose binding lectin. Has hemagglutinating activity towards rabbit erythrocytes, human type A erythrocytes, human type B erythrocytes, human type O erythrocytes and sheep erythrocytes. Hemagglutinating activity is inhibited by smooth-type lipopolysaccharide (LPS) from S.flexneri 1A, A.salmonicida and E.coli K12, but not by rough-type LPS from S.flexneri, E.coli K12 and E.coli EH100. Agglutinates E.coli K12 and B.subtilis. In Oncorhynchus keta (Chum salmon), this protein is L-rhamnose-binding lectin CSL3.